The following is a 521-amino-acid chain: MADNEKLDNQRLKNFKNKGRDLETMRRQRNEVVVELRKNKRDEHLLKRRNVPHEDICEDSDIDGDYRVQNTSLEAIVQNASSDNQGIQLSAVQAARKLLSSDRNPPIDDLIKSGILPILVHCLERDDNPSLQFEAAWALTNIASGTSEQTQAVVQSNAVPLFLRLLHSPHQNVCEQAVWALGNIIGDGPQCRDYVISLGVVKPLLSFISPSIPITFLRNVTWVMVNLCRHKDPPPPMETIQEILPALCVLIHHTDVNILVDTVWALSYLTDAGNEQIQMVIDSGIVPHLVPLLSHQEVKVQTAALRAVGNIVTGTDEQTQVVLNCDALSHFPALLTHPKEKINKEAVWFLSNITAGNQQQVQAVIDANLVPMIIHLLDKGDFGTQKEAAWAISNLTISGRKDQVAYLIQQNVIPPFCNLLTVKDAQVVQVVLDGLSNILKMAEDEAETIGNLIEECGGLEKIEQLQNHENEDIYKLAYEIIDQFFSSDDIDEDPSLVPEAIQGGTFGFNSSANVPTEGFQF.

The residue at position 2 (Ala2) is an N-acetylalanine. The region spanning 2-58 (ADNEKLDNQRLKNFKNKGRDLETMRRQRNEVVVELRKNKRDEHLLKRRNVPHEDICE) is the IBB domain. Residues 43-52 (EHLLKRRNVP) carry the Nuclear localization signal motif. Position 60 is a phosphoserine (Ser60). One copy of the ARM 1; truncated repeat lies at 66–106 (YRVQNTSLEAIVQNASSDNQGIQLSAVQAARKLLSSDRNPP). ARM repeat units follow at residues 107 to 149 (IDDL…TSEQ), 150 to 194 (TQAV…CRDY), 195 to 233 (VISLGVVKPLLSFISPSIPITFLRNVTWVMVNLCRHKDP), 234 to 278 (PPPM…EQIQ), 279 to 318 (MVIDSGIVPHLVPLLSHQEVKVQTAALRAVGNIVTGTDEQ), 319 to 360 (TQVV…NQQQ), 361 to 400 (VQAVIDANLVPMIIHLLDKGDFGTQKEAAWAISNLTISGR), and 401 to 443 (KDQV…KMAE). Residues 137-229 (WALTNIASGT…VTWVMVNLCR (93 aa)) form an NLS binding site (major) region. An NLS binding site (minor) region spans residues 306–394 (RAVGNIVTGT…QKEAAWAISN (89 aa)). Residues 447–485 (ETIGNLIEECGGLEKIEQLQNHENEDIYKLAYEIIDQFF) form an ARM 10; atypical repeat.

It belongs to the importin alpha family. Forms a complex with importin subunit beta-1 (KPNB1). Interacts with SNAI1. Interacts with TALDO1 isoform 1. Interacts with CYB1. As to quaternary structure, (Microbial infection) Interacts with MERS virus protein OF4b; this interaction prevents the translocation of NF-kappa-B complex to the nucleus. In terms of assembly, (Microbial infection) Interacts with human adenovirus 5 E1A protein; this interaction allows E1A import into the host nucleus. (Microbial infection) Interacts with Chikungunya virus capsid protein; this interaction allows the nuclear import of the viral capsid protein. As to expression, highly expressed in testis, ovary, small intestine, heart, skeletal muscle, lung and pancreas, but barely detectable in kidney, thymus, colon and peripheral blood leukocytes.

The protein localises to the cytoplasm. Its subcellular location is the nucleus. In terms of biological role, functions in nuclear protein import as an adapter protein for nuclear receptor KPNB1. Binds specifically and directly to substrates containing either a simple or bipartite NLS motif. Docking of the importin/substrate complex to the nuclear pore complex (NPC) is mediated by KPNB1 through binding to nucleoporin FxFG repeats and the complex is subsequently translocated through the pore by an energy requiring, Ran-dependent mechanism. At the nucleoplasmic side of the NPC, Ran binds to importin-beta and the three components separate and importin-alpha and -beta are re-exported from the nucleus to the cytoplasm where GTP hydrolysis releases Ran from importin. The directionality of nuclear import is thought to be conferred by an asymmetric distribution of the GTP- and GDP-bound forms of Ran between the cytoplasm and nucleus. Mediates nuclear import of AARS1, MRTFA and RANBP3. (Microbial infection) In vitro, mediates the nuclear import of human cytomegalovirus UL84 by recognizing a non-classical NLS. In vitro, mediates the nuclear import of human cytomegalovirus UL84 by recognizing a non-classical NLS. This chain is Importin subunit alpha-3, found in Homo sapiens (Human).